We begin with the raw amino-acid sequence, 280 residues long: Thiamine-phosphate synthase (280 aa).

Positions 1–64 are disordered; the sequence is MGWSGSPLTL…ATGRGGLRMT (64 aa). The span at 42 to 55 shows a compositional bias: basic and acidic residues; it reads GRGELRSRERRGEA. Residues 104–108 and Asn-141 contribute to the 4-amino-2-methyl-5-(diphosphooxymethyl)pyrimidine site; that span reads QLRCK. Mg(2+)-binding residues include Asp-142 and Asp-161. A 4-amino-2-methyl-5-(diphosphooxymethyl)pyrimidine-binding site is contributed by Ser-179. 205 to 207 lines the 2-[(2R,5Z)-2-carboxy-4-methylthiazol-5(2H)-ylidene]ethyl phosphate pocket; sequence TPT. Residue Lys-208 coordinates 4-amino-2-methyl-5-(diphosphooxymethyl)pyrimidine. Gly-236 is a binding site for 2-[(2R,5Z)-2-carboxy-4-methylthiazol-5(2H)-ylidene]ethyl phosphate.

This sequence belongs to the thiamine-phosphate synthase family. Mg(2+) is required as a cofactor.

It carries out the reaction 2-[(2R,5Z)-2-carboxy-4-methylthiazol-5(2H)-ylidene]ethyl phosphate + 4-amino-2-methyl-5-(diphosphooxymethyl)pyrimidine + 2 H(+) = thiamine phosphate + CO2 + diphosphate. The catalysed reaction is 2-(2-carboxy-4-methylthiazol-5-yl)ethyl phosphate + 4-amino-2-methyl-5-(diphosphooxymethyl)pyrimidine + 2 H(+) = thiamine phosphate + CO2 + diphosphate. The enzyme catalyses 4-methyl-5-(2-phosphooxyethyl)-thiazole + 4-amino-2-methyl-5-(diphosphooxymethyl)pyrimidine + H(+) = thiamine phosphate + diphosphate. The protein operates within cofactor biosynthesis; thiamine diphosphate biosynthesis; thiamine phosphate from 4-amino-2-methyl-5-diphosphomethylpyrimidine and 4-methyl-5-(2-phosphoethyl)-thiazole: step 1/1. Condenses 4-methyl-5-(beta-hydroxyethyl)thiazole monophosphate (THZ-P) and 2-methyl-4-amino-5-hydroxymethyl pyrimidine pyrophosphate (HMP-PP) to form thiamine monophosphate (TMP). This Deinococcus radiodurans (strain ATCC 13939 / DSM 20539 / JCM 16871 / CCUG 27074 / LMG 4051 / NBRC 15346 / NCIMB 9279 / VKM B-1422 / R1) protein is Thiamine-phosphate synthase.